Reading from the N-terminus, the 316-residue chain is 1-aminocyclopropane-1-carboxylate oxidase 2 (316 aa).

The Fe2OG dioxygenase domain occupies 153–253 (PNFGTKVSNY…RMSLASFYNP (101 aa)). Positions 177, 179, and 234 each coordinate Fe cation.

It belongs to the iron/ascorbate-dependent oxidoreductase family. The cofactor is Fe cation. Leaves.

It catalyses the reaction 1-aminocyclopropane-1-carboxylate + L-ascorbate + O2 = ethene + L-dehydroascorbate + hydrogen cyanide + CO2 + 2 H2O. The protein operates within alkene biosynthesis; ethylene biosynthesis via S-adenosyl-L-methionine; ethylene from S-adenosyl-L-methionine: step 2/2. This chain is 1-aminocyclopropane-1-carboxylate oxidase 2 (ACO2), found in Solanum lycopersicum (Tomato).